The sequence spans 405 residues: POC1 centriolar protein homolog A (405 aa).

7 WD repeats span residues 17–56, 59–98, 101–140, 143–182, 185–224, 227–266, and 269–308; these read GHRDAVTCVDFSLNTKHLASGSMDSTLMIWHMKPQSRAYR, GHKDAVTCVNFSPSGHLLASGSRDKTVRIWVPNVKGESTV, AHTATVRSVHFCSDGQSLVTASDDKTVKVWSTHRQRFLFS, QHINWVRCAKFSPDGRLIVSASDDKTVKLWDKTSRECIHS, EHGGFVTYVDFHPSGTCIAAAGMDNTVKVWDARTHRLLQH, LHSAAVNALSFHPSGNYLITASSDSTLKILDLMEGRLLYT, and GHQGPATTVAFSRTGEYFASGGSDEQVMVWKSNFDIVDYG. The segment at 313-352 is disordered; that stretch reads RRPPPLTSSSGTLPKMDLPVPPGRDRSLESVQGEPQESIS. Residues 341–352 are compositionally biased toward polar residues; it reads ESVQGEPQESIS. A coiled-coil region spans residues 367 to 395; it reads QLDILTQTVSILEQRLTLTEDRLKQCLEN.

The protein belongs to the WD repeat POC1 family. In terms of assembly, interacts with POC1B. As to expression, widely expressed in embryonic and adult tissues.

The protein resides in the cytoplasm. Its subcellular location is the cytoskeleton. It is found in the microtubule organizing center. The protein localises to the centrosome. It localises to the centriole. The protein resides in the cilium basal body. Its subcellular location is the spindle pole. Its function is as follows. Plays an important role in centriole assembly and/or stability and ciliogenesis. Involved in early steps of centriole duplication, as well as in the later steps of centriole length control. Acts in concert with POC1B to ensure centriole integrity and proper mitotic spindle formation. The chain is POC1 centriolar protein homolog A (Poc1a) from Mus musculus (Mouse).